A 40-amino-acid polypeptide reads, in one-letter code: LTCVKSNSIWFITSENCPAGQNLCFKRWQYISPRMYDFTR.

The cysteines at positions 3 and 24 are disulfide-linked.

It belongs to the three-finger toxin family. Short-chain subfamily. Aminergic toxin sub-subfamily. Monomer. In terms of processing, contains 4 disulfide bonds. Expressed by the venom gland.

It localises to the secreted. Functionally, binds irreversibly and specifically to M1 (CHRM1) muscarinic acetylcholine receptors, blocking further binding of antagonists and preventing the action of agonists. This is Muscarinic m1-toxin4 from Dendroaspis angusticeps (Eastern green mamba).